Reading from the N-terminus, the 346-residue chain is UDP-3-O-acylglucosamine N-acyltransferase (346 aa).

The Proton acceptor role is filled by H240.

Belongs to the transferase hexapeptide repeat family. LpxD subfamily. As to quaternary structure, homotrimer.

The enzyme catalyses a UDP-3-O-[(3R)-3-hydroxyacyl]-alpha-D-glucosamine + a (3R)-hydroxyacyl-[ACP] = a UDP-2-N,3-O-bis[(3R)-3-hydroxyacyl]-alpha-D-glucosamine + holo-[ACP] + H(+). Its pathway is bacterial outer membrane biogenesis; LPS lipid A biosynthesis. Catalyzes the N-acylation of UDP-3-O-acylglucosamine using 3-hydroxyacyl-ACP as the acyl donor. Is involved in the biosynthesis of lipid A, a phosphorylated glycolipid that anchors the lipopolysaccharide to the outer membrane of the cell. The sequence is that of UDP-3-O-acylglucosamine N-acyltransferase from Bacteroides fragilis (strain ATCC 25285 / DSM 2151 / CCUG 4856 / JCM 11019 / LMG 10263 / NCTC 9343 / Onslow / VPI 2553 / EN-2).